A 428-amino-acid polypeptide reads, in one-letter code: 4-hydroxy-3-methylbut-2-en-1-yl diphosphate synthase (flavodoxin) (428 aa).

The [4Fe-4S] cluster site is built by C300, C303, C346, and E353.

The protein belongs to the IspG family. The cofactor is [4Fe-4S] cluster.

The catalysed reaction is (2E)-4-hydroxy-3-methylbut-2-enyl diphosphate + oxidized [flavodoxin] + H2O + 2 H(+) = 2-C-methyl-D-erythritol 2,4-cyclic diphosphate + reduced [flavodoxin]. It functions in the pathway isoprenoid biosynthesis; isopentenyl diphosphate biosynthesis via DXP pathway; isopentenyl diphosphate from 1-deoxy-D-xylulose 5-phosphate: step 5/6. Its function is as follows. Converts 2C-methyl-D-erythritol 2,4-cyclodiphosphate (ME-2,4cPP) into 1-hydroxy-2-methyl-2-(E)-butenyl 4-diphosphate. This Methylobacillus flagellatus (strain ATCC 51484 / DSM 6875 / VKM B-1610 / KT) protein is 4-hydroxy-3-methylbut-2-en-1-yl diphosphate synthase (flavodoxin).